Reading from the N-terminus, the 166-residue chain is 3-isopropylmalate dehydratase small subunit (166 aa).

The protein belongs to the LeuD family. LeuD type 2 subfamily. Heterodimer of LeuC and LeuD.

It catalyses the reaction (2R,3S)-3-isopropylmalate = (2S)-2-isopropylmalate. It participates in amino-acid biosynthesis; L-leucine biosynthesis; L-leucine from 3-methyl-2-oxobutanoate: step 2/4. In terms of biological role, catalyzes the isomerization between 2-isopropylmalate and 3-isopropylmalate, via the formation of 2-isopropylmaleate. This chain is 3-isopropylmalate dehydratase small subunit, found in Heliobacterium modesticaldum (strain ATCC 51547 / Ice1).